We begin with the raw amino-acid sequence, 1080 residues long: DNA polymerase II large subunit (1080 aa).

The protein belongs to the archaeal DNA polymerase II family. In terms of assembly, heterodimer of a large subunit and a small subunit.

It carries out the reaction DNA(n) + a 2'-deoxyribonucleoside 5'-triphosphate = DNA(n+1) + diphosphate. The catalysed reaction is Exonucleolytic cleavage in the 3'- to 5'-direction to yield nucleoside 5'-phosphates.. Possesses two activities: a DNA synthesis (polymerase) and an exonucleolytic activity that degrades single-stranded DNA in the 3'- to 5'-direction. Has a template-primer preference which is characteristic of a replicative DNA polymerase. This Picrophilus torridus (strain ATCC 700027 / DSM 9790 / JCM 10055 / NBRC 100828 / KAW 2/3) protein is DNA polymerase II large subunit.